A 227-amino-acid polypeptide reads, in one-letter code: Eukaryotic translation initiation factor NCBP (227 aa).

Residues 1–22 (MEPAAEKREAEQEELQQQHDEP) show a composition bias toward basic and acidic residues. A disordered region spans residues 1-43 (MEPAAEKREAEQEELQQQHDEPAVPSADDDEAEAEENERRNRE). The span at 27-36 (ADDDEAEAEE) shows a compositional bias: acidic residues.

This sequence belongs to the eukaryotic initiation factor 4E family. EIF4F is a multi-subunit complex, the composition of which varies with external and internal environmental conditions. It is composed of at least EIF4A, EIF4E and EIF4G. EIF4E is also known to interact with other partners. In higher plants two isoforms of EIF4F have been identified, named isoform EIF4F and isoform EIF(iso)4F. Isoform EIF4F has subunits p220 and p26, whereas isoform EIF(iso)4F has subunits p82 and p28.

Recognizes and binds the 7-methylguanosine-containing mRNA cap during an early step in the initiation of protein synthesis and facilitates ribosome binding by inducing the unwinding of the mRNAs secondary structures. The sequence is that of Eukaryotic translation initiation factor NCBP (NCBP) from Oryza sativa subsp. japonica (Rice).